Reading from the N-terminus, the 712-residue chain is U11/U12 small nuclear ribonucleoprotein 48 kDa protein (712 aa).

The CHHC U11-48K-type zinc finger occupies 98 to 125 (FVRCPFDSNHFMPPEALFLHSLRCPNTL). The Zn(2+) site is built by cysteine 101, histidine 107, histidine 117, and cysteine 121. The disordered stretch occupies residues 562-712 (QSRSPIGNDQ…EDRYIPTEKE (151 aa)). Composition is skewed to basic and acidic residues over residues 585 to 595 (KQWKGENRADI), 603 to 614 (QNSDKVKRHDEY), 629 to 663 (KHSD…HSIE), 672 to 693 (SSRE…DRRS), and 702 to 712 (FEDRYIPTEKE).

In terms of assembly, component of the U11/U12 snRNPs that are part of the U12-type spliceosome. Not found in the major spliceosome.

The protein localises to the nucleus. In terms of biological role, likely involved in U12-type 5' splice site recognition. This is U11/U12 small nuclear ribonucleoprotein 48 kDa protein (SNRNP48) from Arabidopsis thaliana (Mouse-ear cress).